The sequence spans 510 residues: ATP synthase subunit alpha (510 aa).

169-176 serves as a coordination point for ATP; the sequence is GDRQTGKT.

The protein belongs to the ATPase alpha/beta chains family. As to quaternary structure, F-type ATPases have 2 components, CF(1) - the catalytic core - and CF(0) - the membrane proton channel. CF(1) has five subunits: alpha(3), beta(3), gamma(1), delta(1), epsilon(1). CF(0) has three main subunits: a(1), b(2) and c(9-12). The alpha and beta chains form an alternating ring which encloses part of the gamma chain. CF(1) is attached to CF(0) by a central stalk formed by the gamma and epsilon chains, while a peripheral stalk is formed by the delta and b chains.

Its subcellular location is the cell membrane. The enzyme catalyses ATP + H2O + 4 H(+)(in) = ADP + phosphate + 5 H(+)(out). In terms of biological role, produces ATP from ADP in the presence of a proton gradient across the membrane. The alpha chain is a regulatory subunit. The sequence is that of ATP synthase subunit alpha from Buchnera aphidicola subsp. Schizaphis graminum (strain Sg).